The chain runs to 120 residues: MITKADKNATRKKRHARVRAKLTGTAERPRLNVFRSNQHIYAQVIDDVKGVTLVSASTLDKDLALNGTGNIEAATKVGELVAKRAVEKGVKEVVFDRGGYLYHGRVKALAEAAREAGLQF.

The protein belongs to the universal ribosomal protein uL18 family. Part of the 50S ribosomal subunit; part of the 5S rRNA/L5/L18/L25 subcomplex. Contacts the 5S and 23S rRNAs.

This is one of the proteins that bind and probably mediate the attachment of the 5S RNA into the large ribosomal subunit, where it forms part of the central protuberance. This Bacillus cytotoxicus (strain DSM 22905 / CIP 110041 / 391-98 / NVH 391-98) protein is Large ribosomal subunit protein uL18.